Here is a 240-residue protein sequence, read N- to C-terminus: Protein CDV3 homolog A (240 aa).

A compositionally biased stretch (basic and acidic residues) spans 1 to 15 (MAEPQEKSLDDFFAK). Residues 1–204 (MAEPQEKSLD…TESRREKEME (204 aa)) are disordered. N-acetylalanine is present on Ala-2. Positions 27 to 52 (SGSAAGSRGSARPPDGAPSSSSSMSG) are enriched in low complexity. Positions 57–73 (VKKEKSGKSDNPDQLQE) are enriched in basic and acidic residues. Polar residues-rich tracts occupy residues 127-141 (DKSSGPWNKTSQAQA) and 181-192 (SDTQFPSLQATA). A compositionally biased stretch (basic and acidic residues) spans 193–204 (KHTESRREKEME).

It belongs to the CDV3 family.

The protein localises to the cytoplasm. This is Protein CDV3 homolog A (cdv3-a) from Xenopus laevis (African clawed frog).